A 50-amino-acid chain; its full sequence is Large ribosomal subunit protein bL33 (50 aa).

It belongs to the bacterial ribosomal protein bL33 family.

This Sulfurimonas denitrificans (strain ATCC 33889 / DSM 1251) (Thiomicrospira denitrificans (strain ATCC 33889 / DSM 1251)) protein is Large ribosomal subunit protein bL33.